A 149-amino-acid chain; its full sequence is Arginine repressor (149 aa).

Belongs to the ArgR family.

The protein resides in the cytoplasm. It participates in amino-acid biosynthesis; L-arginine biosynthesis [regulation]. In terms of biological role, regulates arginine biosynthesis genes. This is Arginine repressor from Bacillus velezensis (strain DSM 23117 / BGSC 10A6 / LMG 26770 / FZB42) (Bacillus amyloliquefaciens subsp. plantarum).